Reading from the N-terminus, the 861-residue chain is Extra-large guanine nucleotide-binding protein 2 (861 aa).

Disordered stretches follow at residues 1–32 and 121–168; these read MAAV…TSSG and VSGS…DDRV. Positions 131–143 are enriched in basic and acidic residues; it reads KRLDVPEEVKSPA. The segment covering 146–156 has biased composition (low complexity); the sequence is RLSPSSPLSAS. The span at 157 to 168 shows a compositional bias: basic and acidic residues; it reads AREEDHLDDDRV. The short motif at 204 to 211 is the Nuclear localization signal element; that stretch reads RAERKGKR. The RING-type; degenerate zinc finger occupies 214 to 257; the sequence is CYRCQLGNRFTEKEVCIVCDAKYCFNCVRRAMGAMPEGRKCQAC. The G-alpha domain maps to 461–853; it reads MLNKLLLIGS…TSMFQEMSTT (393 aa). A G1 motif region spans residues 464–477; that stretch reads KLLLIGSEKGGATT. GTP is bound at residue 469 to 477; that stretch reads GSEKGGATT. Ca(2+) is bound at residue T476. A disordered region spans residues 523-545; the sequence is EMSNDQSSGNVGDETSAKPGNSI. 624–632 lines the GTP pocket; the sequence is DILQAEGLS. Residues 624-632 form a G2 motif region; sequence DILQAEGLS. Residue S632 participates in Ca(2+) binding. Residues 665-674 form a G3 motif region; the sequence is YQLIRLNPRS. A G4 motif region spans residues 737 to 744; sequence LLVLTKFD. 741 to 744 is a GTP binding site; that stretch reads TKFD. A G5 motif region spans residues 818–823; that stretch reads QVSLES.

This sequence belongs to the G-alpha family. XLG subfamily. In terms of assembly, interacts with GB1. Component of a G-protein complex at least composed of XLG2 and GB1. Interacts with RTV1. It depends on Ca(2+) as a cofactor. As to expression, ubiquitous. Strongly expressed in vascular tissues, root and shoot meristems and lateral root primordia.

The protein localises to the nucleus. Its function is as follows. Guanine nucleotide-binding proteins (G proteins) are involved as modulators or transducers in various transmembrane signaling systems. Binds GTP with specificity. Plays a role in the root morphogenesis by regulation of the cell proliferation. Acts as a positive regulator in resistance to pathogen that triggers the salicylic acid (SA) pathway. Promotes the DNA binding activity of RTV1 specifically to promoter regions of FT and SOC1 in vivo leading to the activation of floral integrator genes. This chain is Extra-large guanine nucleotide-binding protein 2 (XLG2), found in Arabidopsis thaliana (Mouse-ear cress).